The sequence spans 412 residues: Aurora kinase (412 aa).

The interval 94-119 (NEKVRPSKSSHIPVKSPIRKKGHSPA) is disordered. One can recognise a Protein kinase domain in the interval 148-401 (FEIGKVLGKG…LAEVMNHPWI (254 aa)). ATP is bound by residues 154 to 162 (LGKGKLGKV) and lysine 177. The Proton acceptor role is filled by aspartate 271.

This sequence belongs to the protein kinase superfamily. Ser/Thr protein kinase family. Aurora subfamily.

It is found in the nucleus. It localises to the cytoplasm. The protein localises to the cytoskeleton. Its subcellular location is the spindle. The protein resides in the chromosome. It is found in the centromere. It localises to the kinetochore. It catalyses the reaction L-seryl-[protein] + ATP = O-phospho-L-seryl-[protein] + ADP + H(+). The catalysed reaction is L-threonyl-[protein] + ATP = O-phospho-L-threonyl-[protein] + ADP + H(+). In terms of biological role, component of the chromosomal passenger complex (CPC), a complex that acts as a key regulator of chromosome segregation and cytokinesis. Has a role in error-correction of aberrent kinetochore-microtubule attachments to ensure that sister kinetochores become bioriented and connect to opposite poles by promoting spindle assembly checkpoint signaling. The protein is Aurora kinase (IPL1) of Debaryomyces hansenii (strain ATCC 36239 / CBS 767 / BCRC 21394 / JCM 1990 / NBRC 0083 / IGC 2968) (Yeast).